Here is a 182-residue protein sequence, read N- to C-terminus: MPLLNSLATPYAEALLQVTEARGESETVADQCKQLLAIWNDSEDFRDAMVSPVLEPDAKKQALKALVGEDVTPSVFNLLKVLADRQRLIAFDAVMLRYLELYREQQGITLAQVRSAQSLTEDQQAALSKKVQAMAGTNKVDIDLSVDPSLIGGFVVSLGSQVIDASLSGQVRRLGLALAKAS.

Belongs to the ATPase delta chain family. F-type ATPases have 2 components, F(1) - the catalytic core - and F(0) - the membrane proton channel. F(1) has five subunits: alpha(3), beta(3), gamma(1), delta(1), epsilon(1). CF(0) has four main subunits: a(1), b(1), b'(1) and c(10-14). The alpha and beta chains form an alternating ring which encloses part of the gamma chain. F(1) is attached to F(0) by a central stalk formed by the gamma and epsilon chains, while a peripheral stalk is formed by the delta, b and b' chains.

It localises to the cellular thylakoid membrane. F(1)F(0) ATP synthase produces ATP from ADP in the presence of a proton or sodium gradient. F-type ATPases consist of two structural domains, F(1) containing the extramembraneous catalytic core and F(0) containing the membrane proton channel, linked together by a central stalk and a peripheral stalk. During catalysis, ATP synthesis in the catalytic domain of F(1) is coupled via a rotary mechanism of the central stalk subunits to proton translocation. Functionally, this protein is part of the stalk that links CF(0) to CF(1). It either transmits conformational changes from CF(0) to CF(1) or is implicated in proton conduction. This is ATP synthase subunit delta from Synechococcus sp. (strain CC9605).